The following is a 1002-amino-acid chain: Chitin synthase II (1002 aa).

Disordered stretches follow at residues 1 to 165 (MDRP…GRTS) and 178 to 209 (LDGS…SGSQ). The span at 63–78 (SYQPSVVSSHSRSASV) shows a compositional bias: low complexity. N-linked (GlcNAc...) asparagine glycosylation is present at Asn-123. N-linked (GlcNAc...) asparagine glycosylation is present at Asn-336. The next 8 membrane-spanning stretches (helical) occupy residues 627-647 (WLNG…QILA), 669-689 (LLFT…VAGG), 704-724 (SVIF…QFIL), 740-760 (SMII…YIVV), 780-800 (LIVS…LYLE), 808-828 (SLQY…YAFC), 906-926 (YMVV…SEIY), and 940-960 (ILWA…TFAI).

The protein belongs to the chitin synthase family. Class II subfamily. As to expression, expressed in hyphal bodies.

It localises to the cell membrane. It carries out the reaction [(1-&gt;4)-N-acetyl-beta-D-glucosaminyl](n) + UDP-N-acetyl-alpha-D-glucosamine = [(1-&gt;4)-N-acetyl-beta-D-glucosaminyl](n+1) + UDP + H(+). In terms of biological role, polymerizes chitin, a structural polymer of the cell wall and septum, by transferring the sugar moiety of UDP-GlcNAc to the non-reducing end of the growing chitin polymer. Contributes to the production of conidia and the ability of fungal conidia to germinate. Involved in fungal stress tolerances. This Metarhizium acridum (strain CQMa 102) protein is Chitin synthase II.